Reading from the N-terminus, the 326-residue chain is Neuferricin homolog (326 aa).

The N-terminal stretch at 1–34 is a signal peptide; sequence MEKNRRKKDDAGVMTKTLAGVAALTFLVSFICSS. The Cytochrome b5 heme-binding domain occupies 98 to 197; that stretch reads KHVFTPEQLH…KEYPLVGVVA (100 aa).

Belongs to the cytochrome b5 family. MAPR subfamily.

It localises to the secreted. In terms of biological role, heme-binding protein. This chain is Neuferricin homolog, found in Caenorhabditis briggsae.